We begin with the raw amino-acid sequence, 32 residues long: Photosystem II reaction center protein Z (32 aa).

Residues 9–29 form a helical membrane-spanning segment; sequence IIFSGSLIWVFLLIIVGFLNY.

This sequence belongs to the PsbZ family. In terms of assembly, PSII is composed of 1 copy each of membrane proteins PsbA, PsbB, PsbC, PsbD, PsbE, PsbF, PsbH, PsbI, PsbJ, PsbK, PsbL, PsbM, PsbT, PsbY, PsbZ, Psb30/Ycf12, at least 3 peripheral proteins of the oxygen-evolving complex and a large number of cofactors. It forms dimeric complexes.

It is found in the plastid. The protein resides in the chloroplast thylakoid membrane. Its function is as follows. May control the interaction of photosystem II (PSII) cores with the light-harvesting antenna, regulates electron flow through the 2 photosystem reaction centers. PSII is a light-driven water plastoquinone oxidoreductase, using light energy to abstract electrons from H(2)O, generating a proton gradient subsequently used for ATP formation. This Euglena myxocylindracea protein is Photosystem II reaction center protein Z.